We begin with the raw amino-acid sequence, 276 residues long: Large ribosomal subunit protein uL2 (276 aa).

2 disordered regions span residues 37-59 (QFQKSGRNNNGHITTRHKGGGHK) and 225-276 (VMNP…RHKR). The segment covering 39-49 (QKSGRNNNGHI) has biased composition (polar residues). Positions 50 to 59 (TTRHKGGGHK) are enriched in basic residues.

Belongs to the universal ribosomal protein uL2 family. As to quaternary structure, part of the 50S ribosomal subunit. Forms a bridge to the 30S subunit in the 70S ribosome.

One of the primary rRNA binding proteins. Required for association of the 30S and 50S subunits to form the 70S ribosome, for tRNA binding and peptide bond formation. It has been suggested to have peptidyltransferase activity; this is somewhat controversial. Makes several contacts with the 16S rRNA in the 70S ribosome. The polypeptide is Large ribosomal subunit protein uL2 (Cupriavidus pinatubonensis (strain JMP 134 / LMG 1197) (Cupriavidus necator (strain JMP 134))).